Reading from the N-terminus, the 416-residue chain is Gamma-glutamyl phosphate reductase (416 aa).

This sequence belongs to the gamma-glutamyl phosphate reductase family.

The protein resides in the cytoplasm. The enzyme catalyses L-glutamate 5-semialdehyde + phosphate + NADP(+) = L-glutamyl 5-phosphate + NADPH + H(+). It participates in amino-acid biosynthesis; L-proline biosynthesis; L-glutamate 5-semialdehyde from L-glutamate: step 2/2. Its function is as follows. Catalyzes the NADPH-dependent reduction of L-glutamate 5-phosphate into L-glutamate 5-semialdehyde and phosphate. The product spontaneously undergoes cyclization to form 1-pyrroline-5-carboxylate. This Vibrio cholerae serotype O1 (strain ATCC 39541 / Classical Ogawa 395 / O395) protein is Gamma-glutamyl phosphate reductase.